The following is a 213-amino-acid chain: KHG/KDPG aldolase (213 aa).

The active-site Proton acceptor is glutamate 45. Residues arginine 49, threonine 73, and lysine 133 each coordinate pyruvate. The Schiff-base intermediate with substrate role is filled by lysine 133.

Belongs to the KHG/KDPG aldolase family. Homotrimer.

The protein resides in the cytoplasm. The enzyme catalyses 2-dehydro-3-deoxy-6-phospho-D-gluconate = D-glyceraldehyde 3-phosphate + pyruvate. It carries out the reaction (4S)-4-hydroxy-2-oxoglutarate = glyoxylate + pyruvate. It participates in carbohydrate acid metabolism; 2-dehydro-3-deoxy-D-gluconate degradation; D-glyceraldehyde 3-phosphate and pyruvate from 2-dehydro-3-deoxy-D-gluconate: step 2/2. It functions in the pathway carbohydrate metabolism; glyoxylate and dicarboxylate metabolism. Involved in the degradation of glucose via the Entner-Doudoroff pathway. Catalyzes the reversible, stereospecific retro-aldol cleavage of 2-keto-3-deoxy-6-phosphogluconate (KDPG) to pyruvate and D-glyceraldehyde-3-phosphate. In addition to its KDPG aldolase activity, catalyzes the reversible cleavage of 2-keto-4-hydroxyglutarate (KHG) to glyoxylate and pyruvate. The enzyme is stereoselective for the S-enantiomer of KHG. Cleavage of KHG could serve in tricarboxylic acid (TCA) cycle regulation or, when operating in the reverse direction, in the detoxification of glyoxylate. The chain is KHG/KDPG aldolase (eda) from Escherichia coli O157:H7.